Here is a 214-residue protein sequence, read N- to C-terminus: Outer-membrane lipoprotein LolB (214 aa).

The first 25 residues, 1 to 25, serve as a signal peptide directing secretion; sequence MNNLKRFTKSIFSCIALSGLLFLGG. Cys-26 is lipidated: N-palmitoyl cysteine. Cys-26 is lipidated: S-diacylglycerol cysteine.

The protein belongs to the LolB family. In terms of assembly, monomer.

The protein resides in the cell outer membrane. Functionally, plays a critical role in the incorporation of lipoproteins in the outer membrane after they are released by the LolA protein. This chain is Outer-membrane lipoprotein LolB, found in Shewanella sp. (strain MR-4).